The chain runs to 3938 residues: Protein bassoon (3938 aa).

The segment at 1 to 158 (MGNEASLEGG…PTSPYSVPQI (158 aa)) is disordered. The N-myristoyl glycine moiety is linked to residue glycine 2. Residues 9–29 (GGAGEGPLPPGGSGLGPGPGA) are compositionally biased toward gly residues. Residues 31 to 61 (KPPSALAGGGQLPVAGAARAAGPPTPGLGLV) are compositionally biased toward low complexity. The 4 X 2 AA tandem repeats of P-G stretch occupies residues 62 to 70 (PGPGPGPGP). 2 stretches are compositionally biased toward polar residues: residues 86 to 98 (QRAT…QASA) and 127 to 154 (QVDS…SPYS). The residue at position 142 (serine 142) is a Phosphoserine. Arginine 145 bears the Omega-N-methylarginine mark. C4-type zinc fingers lie at residues 167 to 190 (CPIC…CTQC) and 195 to 217 (CNQC…CLNC). Disordered stretches follow at residues 228-346 (TTAP…LTGK) and 361-456 (LMSV…KTMP). Positions 230–240 (APRSKSQQQLH) are enriched in polar residues. Phosphoserine is present on residues serine 241 and serine 245. The span at 361–376 (LMSVQPEADTQGQPSP) shows a compositional bias: polar residues. The segment covering 394-406 (PRPPGSGPGPGPT) has biased composition (pro residues). 2 C4-type zinc fingers span residues 462-485 (CPLC…CTAC) and 490-512 (CTLC…CLNC). Disordered regions lie at residues 523–921 (GEPA…LQGG), 934–1247 (GRLW…TPAG), 1294–1541 (MDPM…WQQS), and 1561–1611 (RMVH…RAPS). Residues 526 to 539 (APLPLPTPQEPPAG) are compositionally biased toward pro residues. Low complexity predominate over residues 548–589 (SPLKQKGPQGPGQPSGSLPPKASPQAAKASPQAAKASPQAKP). 3 repeat units span residues 568–574 (KASPQAA), 575–581 (KASPQAA), and 582–588 (KASPQAK). Positions 568-588 (KASPQAAKASPQAAKASPQAK) are 3 X 7 AA tandem repeats of K-A-S-P-Q-A-[AK]. A compositionally biased stretch (pro residues) spans 616-629 (VPKPPPETAVPPGT). The segment covering 668–677 (QDLSRSPQSL) has biased composition (polar residues). A compositionally biased stretch (low complexity) spans 678–692 (SDTGYSSDGVSSSQS). A compositionally biased stretch (polar residues) spans 693-702 (EITGVVQQEV). Composition is skewed to acidic residues over residues 769-784 (FDSD…EDDS) and 847-858 (SAEEDNLEEDDT). At arginine 863 the chain carries Omega-N-methylarginine. Residue serine 965 is modified to Phosphoserine. Residues 979 to 996 (PASTPSYTSGTSPTSLSS) are compositionally biased toward low complexity. Residues 1032–1087 (IEDSSEEEELREEEELLREQEKMREVEQQRIRSTARKTRRDKEELRAQRRRERSKT) are a coiled coil. Positions 1034–1047 (DSSEEEELREEEEL) are enriched in acidic residues. 2 positions are modified to phosphoserine: serine 1035 and serine 1036. Positions 1048 to 1061 (LREQEKMREVEQQR) are enriched in basic and acidic residues. The residue at position 1085 (serine 1085) is a Phosphoserine. The residue at position 1087 (threonine 1087) is a Phosphothreonine. Residues serine 1093 and serine 1099 each carry the phosphoserine modification. Basic and acidic residues predominate over residues 1102 to 1117 (EELRQAAEMEELHRSS). Low complexity-rich tracts occupy residues 1118 to 1128 (CSEYSPSPSLD) and 1158 to 1175 (SPTE…SGRP). Residues 1176 to 1203 (LKSAEEAYEDMMRKAELLQRQQGQAAGA) adopt a coiled-coil conformation. A compositionally biased stretch (basic and acidic residues) spans 1177–1192 (KSAEEAYEDMMRKAEL). Low complexity predominate over residues 1194–1204 (QRQQGQAAGAR). Residues 1211–1224 (SQPTGPRSQGSFEY) are compositionally biased toward polar residues. Serine 1221 is subject to Phosphoserine. Low complexity predominate over residues 1318–1328 (SFPTSTSSDSS). Threonine 1339 carries O-linked (GlcNAc) threonine glycosylation. Residues 1342–1351 (FAKEPQEPLK) show a composition bias toward basic and acidic residues. Low complexity-rich tracts occupy residues 1352 to 1364 (LHSS…LASK) and 1374 to 1386 (PGTP…APCP). The O-linked (GlcNAc) threonine glycan is linked to threonine 1380. A compositionally biased stretch (polar residues) spans 1402–1426 (SPSTSSTIHSYGQPPTTANYGSQTE). Phosphoserine occurs at positions 1470, 1479, and 1481. The span at 1476–1487 (STPSESPTFSPS) shows a compositional bias: low complexity. Composition is skewed to polar residues over residues 1496–1510 (EFST…SSDI) and 1561–1597 (RMVH…SQMP). An omega-N-methylarginine mark is found at arginine 1780 and arginine 1784. Arginine 1794 is modified (asymmetric dimethylarginine; alternate). Arginine 1794 carries the post-translational modification Omega-N-methylarginine; alternate. Arginine 1806 carries the post-translational modification Omega-N-methylarginine. Positions 1914–1964 (PSAPDKSVTDAALPGQSSGPFYSPRDPEPPEPLTFRAQGVVGPGPHEEQRP) are disordered. O-linked (GlcNAc) threonine glycosylation occurs at threonine 1922. 2 positions are modified to phosphoserine: serine 1978 and serine 2034. Omega-N-methylarginine occurs at positions 2039 and 2069. Asymmetric dimethylarginine occurs at positions 2243, 2253, and 2259. Positions 2280–2305 (AAKASGAGGPPRPELPAGGAREEPLS) are disordered. The O-linked (GlcNAc) threonine glycan is linked to threonine 2307. 2 disordered regions span residues 2318–2343 (VAQA…SGVL) and 2461–2486 (EEQK…PPAA). Residues 2345-2470 (RPVMEKEEAS…EEQKQRQKAP (126 aa)) adopt a coiled-coil conformation. Residue threonine 2510 is glycosylated (O-linked (GlcNAc) threonine). Residues 2513–2648 (PGQAREPVLH…HEASASSSAA (136 aa)) are disordered. The span at 2527–2537 (SSASDMSLQTE) shows a compositional bias: polar residues. Serine 2564 is modified (phosphoserine). Threonine 2581 and threonine 2608 each carry phosphothreonine. A compositionally biased stretch (basic and acidic residues) spans 2629 to 2641 (RHSDSGSDSKHEA). An O-linked (GlcNAc) threonine glycan is attached at threonine 2685. The interaction with DAO stretch occupies residues 2715 to 3263 (EPDGQAQGVA…GGVSGRPGKD (549 aa)). Serine 2796, serine 2845, and serine 2851 each carry phosphoserine. The segment at 2839-2859 (TLQRSLSDPKPLSPTAEESAK) is disordered. Residue threonine 2930 is glycosylated (O-linked (GlcNAc) threonine). Residues 2933 to 2975 (SLLRELDRDLRLVEHESTKLRKKQAELDEEEKEIDAKLKYLEL) are a coiled coil. Residues 2934–2996 (LLRELDRDLR…DRVGRDYPPL (63 aa)) are sufficient for binding to ERC2. Residue serine 3007 is modified to Phosphoserine. Residues 3055 to 3068 (TQYTAGSSGPTQNG) are compositionally biased toward polar residues. Disordered stretches follow at residues 3055 to 3148 (TQYT…ADLE), 3162 to 3399 (AVTV…SRKF), 3414 to 3546 (QQRY…PRAH), and 3569 to 3910 (YHLG…VFSK). A compositionally biased stretch (basic and acidic residues) spans 3184–3196 (EHGKAPEHPRGGD). Residues 3198–3222 (SSVSQSPAPTYPSDSHYTSLEQNVP) are compositionally biased toward polar residues. The residue at position 3286 (serine 3286) is a Phosphoserine. Positions 3304–3315 (ESNGRPASTHYY) are enriched in polar residues. Basic and acidic residues-rich tracts occupy residues 3316 to 3328 (SDSD…RADK), 3358 to 3377 (QGME…KDVE), and 3450 to 3469 (LSSH…RETA). Position 3368 is a phosphoserine (serine 3368). Arginine 3488 bears the Omega-N-methylarginine mark. Low complexity predominate over residues 3506 to 3520 (PLGRPRPAGGALPPG). Composition is skewed to basic and acidic residues over residues 3535–3546 (VQEHVKDGPRAH) and 3578–3588 (WFDKPRDARSD). Over residues 3638–3651 (EHRHHGDHGRHSGR) the composition is skewed to basic residues. The segment covering 3652 to 3676 (HAGEEPGRRAARPHARDMGRHETRP) has biased composition (basic and acidic residues). Residues 3751–3820 (PQQSQPPSSR…ARLQQQSQPT (70 aa)) are compositionally biased toward low complexity. Positions 3772-3803 (QTQQQQQQQQQQQQQQQQQQQQQQQQGLGQQA) form a coiled coil. Arginine 3822 carries the post-translational modification Omega-N-methylarginine. A compositionally biased stretch (pro residues) spans 3834-3848 (KPQPGPTTAPGPQPA). Composition is skewed to low complexity over residues 3860–3887 (KPAA…KTGA) and 3894–3904 (GAPAGQPAAEG).

Interacts with PCLO, ERC2/CAST1, RIMS1 and UNC13A. Interacts with TPRG1L. Interacts with DYNLL1 and DYNLL2; these interactions potentially link PTVs to dynein and myosin V motor complexes. Interacts with ATG5; this interaction is important for the regulation of presynaptic autophagy. Interacts (via C-terminus) with TRIO (via N-terminus). Interacts with CTBP1. Interacts with SIAH1; this interaction negatively regulates SIAH1 E3 ligase activity. Interacts (via coiled region) with DAO; the interaction is direct. Post-translationally, myristoylated. The N-terminal myristoylation is not sufficient for presynaptic localization. Detected at synapses in the stratum lucidum in the hippocampus CA3 region (at protein level).

Its subcellular location is the cytoplasm. It localises to the presynaptic active zone. The protein resides in the cytoskeleton. The protein localises to the cytoplasmic vesicle. It is found in the secretory vesicle. Its subcellular location is the synaptic vesicle membrane. Its function is as follows. Scaffold protein of the presynaptic cytomatrix at the active zone (CAZ) which is the place in the synapse where neurotransmitter is released. After synthesis, participates in the formation of Golgi-derived membranous organelles termed Piccolo-Bassoon transport vesicles (PTVs) that are transported along axons to sites of nascent synaptic contacts. At the presynaptic active zone, regulates the spatial organization of synaptic vesicle cluster, the protein complexes that execute membrane fusion and compensatory endocytosis. Also functions in processes other than assembly such as the regulation of specific presynaptic protein ubiquitination by interacting with SIAH1 or the regulation of presynaptic autophagy by associating with ATG5. Also mediates synapse to nucleus communication leading to reconfiguration of gene expression by associating with the transcriptional corepressor CTBP1 and by subsequently reducing the size of its pool available for nuclear import. Inhibits the activity of the proportion of DAO enzyme that localizes to the presynaptic active zone, which may modulate synaptic transmission. In Rattus norvegicus (Rat), this protein is Protein bassoon.